The primary structure comprises 489 residues: Betaine aldehyde dehydrogenase (489 aa).

Residues T26 and D93 each contribute to the K(+) site. 150–152 (GAW) is a binding site for NAD(+). Residue K162 is the Charge relay system of the active site. Position 176-179 (176-179 (KPSE)) interacts with NAD(+). V180 provides a ligand contact to K(+). 229–232 (GVET) is a binding site for NAD(+). L245 is a K(+) binding site. Catalysis depends on E251, which acts as the Proton acceptor. NAD(+) is bound by residues G253, C285, and E386. C285 functions as the Nucleophile in the catalytic mechanism. C285 carries the post-translational modification Cysteine sulfenic acid (-SOH). K(+)-binding residues include K456 and G459. E463 serves as the catalytic Charge relay system.

It belongs to the aldehyde dehydrogenase family. As to quaternary structure, dimer of dimers. K(+) serves as cofactor.

The catalysed reaction is betaine aldehyde + NAD(+) + H2O = glycine betaine + NADH + 2 H(+). Its pathway is amine and polyamine biosynthesis; betaine biosynthesis via choline pathway; betaine from betaine aldehyde: step 1/1. Functionally, involved in the biosynthesis of the osmoprotectant glycine betaine. Catalyzes the irreversible oxidation of betaine aldehyde to the corresponding acid. The chain is Betaine aldehyde dehydrogenase from Burkholderia pseudomallei (strain 1106a).